The sequence spans 218 residues: Peptide methionine sulfoxide reductase A2 (218 aa).

Over residues 1-19 (MDSSLKTQEPQVVETSPSP) the composition is skewed to polar residues. The segment at 1 to 30 (MDSSLKTQEPQVVETSPSPVAQEPPQVADK) is disordered. S205 is modified (phosphoserine).

Belongs to the MsrA Met sulfoxide reductase family.

The protein localises to the cytoplasm. It localises to the cytosol. It carries out the reaction L-methionyl-[protein] + [thioredoxin]-disulfide + H2O = L-methionyl-(S)-S-oxide-[protein] + [thioredoxin]-dithiol. The enzyme catalyses [thioredoxin]-disulfide + L-methionine + H2O = L-methionine (S)-S-oxide + [thioredoxin]-dithiol. Activated during dark in short day conditions. Functionally, catalyzes the reduction of methionine sulfoxide (MetSO) to methionine in proteins. Plays a protective role against oxidative stress by restoring activity to proteins that have been inactivated by methionine oxidation. Prevents cellular oxidative damage in long nights. MSRA family specifically reduces the MetSO S-enantiomer. This chain is Peptide methionine sulfoxide reductase A2 (MRSA2), found in Arabidopsis thaliana (Mouse-ear cress).